We begin with the raw amino-acid sequence, 70 residues long: Large ribosomal subunit protein bL31 (70 aa).

Zn(2+) is bound by residues cysteine 16, cysteine 18, cysteine 37, and cysteine 40.

This sequence belongs to the bacterial ribosomal protein bL31 family. Type A subfamily. In terms of assembly, part of the 50S ribosomal subunit. Zn(2+) serves as cofactor.

In terms of biological role, binds the 23S rRNA. The sequence is that of Large ribosomal subunit protein bL31 from Shewanella woodyi (strain ATCC 51908 / MS32).